A 358-amino-acid polypeptide reads, in one-letter code: 2-oxoisovalerate dehydrogenase subunit beta 2, mitochondrial (358 aa).

Residues 1 to 16 constitute a mitochondrion transit peptide; the sequence is MAAALVRRFCRGSSFP. Tyrosine 119 contributes to the thiamine diphosphate binding site. K(+) contacts are provided by glycine 145, leucine 147, threonine 148, aspartate 198, and asparagine 200.

As to quaternary structure, heterotetramer of alpha and beta chains. Thiamine diphosphate is required as a cofactor. Expressed in the non-photosynthetic organs such as siliques, flowers and roots.

Its subcellular location is the mitochondrion matrix. The enzyme catalyses N(6)-[(R)-lipoyl]-L-lysyl-[protein] + 3-methyl-2-oxobutanoate + H(+) = N(6)-[(R)-S(8)-2-methylpropanoyldihydrolipoyl]-L-lysyl-[protein] + CO2. Functionally, the branched-chain alpha-keto dehydrogenase complex catalyzes the overall conversion of alpha-keto acids to acyl-CoA and CO(2). It contains multiple copies of three enzymatic components: branched-chain alpha-keto acid decarboxylase (E1), lipoamide acyltransferase (E2) and lipoamide dehydrogenase (E3). Required during sugar starvation and acts under the control of a sugar-sensing mechanism involving Ser/Thr kinases and phosphatases. The sequence is that of 2-oxoisovalerate dehydrogenase subunit beta 2, mitochondrial (DIN4) from Arabidopsis thaliana (Mouse-ear cress).